Reading from the N-terminus, the 283-residue chain is NAD(P)H-hydrate epimerase (283 aa).

Residues 1 to 28 (MLGVRALFGIGLLVTSRGGFVLTHTRAC) constitute a mitochondrion transit peptide. The YjeF N-terminal domain maps to 61–270 (AQQIDEELFS…VLEQKYQLNL (210 aa)). (6S)-NADPHX is bound at residue 115 to 119 (NNGGD). K(+) is bound by residues Asn-116 and Asp-180. (6S)-NADPHX-binding positions include 184–190 (GFSFKGA) and Asp-213. Ser-216 is a K(+) binding site.

It belongs to the NnrE/AIBP family. Homodimer. Interacts with apoa1a. Binds to high-density lipoprotein. K(+) serves as cofactor.

It localises to the mitochondrion. Its subcellular location is the secreted. The catalysed reaction is (6R)-NADHX = (6S)-NADHX. The enzyme catalyses (6R)-NADPHX = (6S)-NADPHX. Catalyzes the epimerization of the S- and R-forms of NAD(P)HX, a damaged form of NAD(P)H that is a result of enzymatic or heat-dependent hydration. This is a prerequisite for the S-specific NAD(P)H-hydrate dehydratase to allow the repair of both epimers of NAD(P)HX. This Danio rerio (Zebrafish) protein is NAD(P)H-hydrate epimerase.